Reading from the N-terminus, the 409-residue chain is Elongation factor Tu (409 aa).

Positions 10 to 214 (KPHVNIGTIG…AVDSYIPDPE (205 aa)) constitute a tr-type G domain. The segment at 19–26 (GHVDHGKT) is G1. Position 19-26 (19-26 (GHVDHGKT)) interacts with GTP. A Mg(2+)-binding site is contributed by T26. The G2 stretch occupies residues 60–64 (GITIN). Residues 81–84 (DCPG) form a G3 region. GTP-binding positions include 81 to 85 (DCPGH) and 136 to 139 (NKED). A G4 region spans residues 136-139 (NKED). The segment at 174–176 (SGL) is G5.

In terms of assembly, monomer.

The protein localises to the cytoplasm. It catalyses the reaction GTP + H2O = GDP + phosphate + H(+). Functionally, GTP hydrolase that promotes the GTP-dependent binding of aminoacyl-tRNA to the A-site of ribosomes during protein biosynthesis. This chain is Elongation factor Tu, found in Nostoc sp. (strain PCC 7120 / SAG 25.82 / UTEX 2576).